Here is a 137-residue protein sequence, read N- to C-terminus: UPF0146 protein MJ0688 (137 aa).

This sequence belongs to the UPF0146 family.

This chain is UPF0146 protein MJ0688, found in Methanocaldococcus jannaschii (strain ATCC 43067 / DSM 2661 / JAL-1 / JCM 10045 / NBRC 100440) (Methanococcus jannaschii).